Consider the following 161-residue polypeptide: Probable endopeptidase HI_1314 (161 aa).

The signal sequence occupies residues 1–18; that stretch reads MKVYKSFLIATASLFLFA. Residue cysteine 19 is the site of N-palmitoyl cysteine attachment. The S-diacylglycerol cysteine moiety is linked to residue cysteine 19. The 123-residue stretch at 39 to 161 folds into the NlpC/P60 domain; sequence IMAIAMLSEQ…SKAFWQVRRI (123 aa). The Nucleophile role is filled by cysteine 69. The active-site Proton acceptor is the histidine 122. The active site involves histidine 134.

This sequence belongs to the peptidase C40 family.

It localises to the cell membrane. This chain is Probable endopeptidase HI_1314, found in Haemophilus influenzae (strain ATCC 51907 / DSM 11121 / KW20 / Rd).